A 105-amino-acid polypeptide reads, in one-letter code: Large ribosomal subunit protein uL22 (105 aa).

The protein belongs to the universal ribosomal protein uL22 family. In terms of assembly, part of the 50S ribosomal subunit.

Functionally, this protein binds specifically to 23S rRNA; its binding is stimulated by other ribosomal proteins, e.g. L4, L17, and L20. It is important during the early stages of 50S assembly. It makes multiple contacts with different domains of the 23S rRNA in the assembled 50S subunit and ribosome. Its function is as follows. The globular domain of the protein is located near the polypeptide exit tunnel on the outside of the subunit, while an extended beta-hairpin is found that lines the wall of the exit tunnel in the center of the 70S ribosome. The polypeptide is Large ribosomal subunit protein uL22 (Sulfurimonas denitrificans (strain ATCC 33889 / DSM 1251) (Thiomicrospira denitrificans (strain ATCC 33889 / DSM 1251))).